The sequence spans 502 residues: Cytochrome P450 83A1 (502 aa).

A helical transmembrane segment spans residues methionine 1–glutamine 21. Cysteine 442 serves as a coordination point for heme.

Belongs to the cytochrome P450 family. It depends on heme as a cofactor.

Its subcellular location is the endoplasmic reticulum membrane. The enzyme catalyses an (E)-omega-(methylsulfanyl)-alkanal oxime + glutathione + reduced [NADPH--hemoprotein reductase] + O2 = an S-[(1E)-1-(hydroxyimino)-omega-(methylsulfanyl)alkyl]-L-glutathione + oxidized [NADPH--hemoprotein reductase] + 2 H2O + H(+). Involved in the metabolism of aliphatic and aromatic oximes. Involved in the biosynthesis of both short-chain and long-chain aliphatic glucosinolates. In Arabidopsis thaliana (Mouse-ear cress), this protein is Cytochrome P450 83A1 (CYP83A1).